A 540-amino-acid chain; its full sequence is Glucose-6-phosphate isomerase (540 aa).

Residue Glu-350 is the Proton donor of the active site. Residues His-381 and Lys-503 contribute to the active site.

The protein belongs to the GPI family.

Its subcellular location is the cytoplasm. It catalyses the reaction alpha-D-glucose 6-phosphate = beta-D-fructose 6-phosphate. It participates in carbohydrate biosynthesis; gluconeogenesis. It functions in the pathway carbohydrate degradation; glycolysis; D-glyceraldehyde 3-phosphate and glycerone phosphate from D-glucose: step 2/4. Catalyzes the reversible isomerization of glucose-6-phosphate to fructose-6-phosphate. The polypeptide is Glucose-6-phosphate isomerase (Burkholderia multivorans (strain ATCC 17616 / 249)).